Consider the following 175-residue polypeptide: B9 domain-containing protein 2 (175 aa).

The region spanning 2–118 (AEVHVIGQII…DCPTWRPLGS (117 aa)) is the C2 B9-type domain.

It belongs to the B9D family. In terms of assembly, part of the tectonic-like complex (also named B9 complex). Interacts with TUBG1. As to expression, highest expression in thymus and skeletal muscle. Also expressed in spleen, kidney, lung, heart, microglia and liver. Detected in brain (at protein level).

It localises to the cytoplasm. The protein resides in the cytoskeleton. It is found in the cilium basal body. The protein localises to the cilium axoneme. Its subcellular location is the nucleus. Its function is as follows. Component of the tectonic-like complex, a complex localized at the transition zone of primary cilia and acting as a barrier that prevents diffusion of transmembrane proteins between the cilia and plasma membranes. The protein is B9 domain-containing protein 2 (B9d2) of Mus musculus (Mouse).